Here is a 359-residue protein sequence, read N- to C-terminus: MKIAFIGEAVSGFGGMETVISNVIHTFENSSPKINCEMFFFCRNDKMDKAWLKEIKYAQSFSNIKLSFLRRAKHVYNFSQWLKETSPDIVICIDVISCLYANKARKKSGKHFTIFSWPHFSLDHKKHAECITYADYHLAISSGIKEQIMARGISAQDISVVYNPVSIKTVIVPPPERDKPAVFLYVGRLKFEGQKRVKDLFDGLARTTGEWQLHIIGDGSDFEKCQAYSRELGIEQRVIWYGWQSAPWQVVQQKIKNVTALLLTSAFEGFPMTLLEAMSYGIPCISSDCMSGPRDMIKPGLNGELYTPGAIDDFVGHLNRVISGEVKYQHDIIPGTIERFYDVLYFKNFNNAIFSKLQK.

Residues Gln244 and Glu276 each contribute to the UDP site.

This sequence belongs to the glycosyltransferase group 1 family. Glycosyltransferase 4 subfamily.

It catalyses the reaction alpha-D-Glc-(1-&gt;3)-[L-alpha-D-Hep-(1-&gt;7)]-4-O-PO3(2-)-L-alpha-D-Hep-(1-&gt;3)-4-O-PO3(2-)-L-alpha-D-Hep-(1-&gt;5)-[alpha-Kdo-(2-&gt;4)]-alpha-Kdo-(2-&gt;6)-lipid A + UDP-alpha-D-galactose = alpha-D-Gal-(1-&gt;6)-alpha-D-Glc-(1-&gt;3)-[L-alpha-D-Hep-(1-&gt;7)]-4-O-PO3(2-)-L-alpha-D-Hep-(1-&gt;3)-4-O-PO3(2-)-L-alpha-D-Hep-(1-&gt;5)-[alpha-Kdo-(2-&gt;4)]-alpha-Kdo-(2-&gt;6)-lipid A + UDP + H(+). Its pathway is bacterial outer membrane biogenesis; LPS core biosynthesis. Its function is as follows. Galactosyltransferase involved in the biosynthesis of the core oligosaccharide region of lipopolysaccharide (LPS). Catalyzes the addition of galactose from UDP-galactose to the first glucose residue of the LPS outer core. The polypeptide is Lipopolysaccharide 1,6-galactosyltransferase (Salmonella typhimurium (strain LT2 / SGSC1412 / ATCC 700720)).